The sequence spans 144 residues: MWLQSLLLLGTVACSISAPARSPSPSTQPWEHVNAIQEARRLLNLSRDTAAEMNETVEVISEMFDLQEPTCLQTRLELYKQGLRGSLTKLKGPLTMMASHYKQHCPPTPETSCATQIITFESFKENLKDFLLVIPFDCWEPVQE.

Residues 1–17 form the signal peptide; that stretch reads MWLQSLLLLGTVACSIS. O-linked (GalNAc...) serine glycosylation is found at Ser22, Ser24, and Ser26. Thr27 is a glycosylation site (O-linked (GalNAc...) threonine; partial). Asn44 and Asn54 each carry an N-linked (GlcNAc...) asparagine glycan. Cystine bridges form between Cys71-Cys113 and Cys105-Cys138.

This sequence belongs to the GM-CSF family. In terms of assembly, monomer. The signaling GM-CSF receptor complex is a dodecamer of two head-to-head hexamers of two alpha, two beta, and two ligand subunits.

It is found in the secreted. Cytokine that stimulates the growth and differentiation of hematopoietic precursor cells from various lineages, including granulocytes, macrophages, eosinophils and erythrocytes. This Homo sapiens (Human) protein is Granulocyte-macrophage colony-stimulating factor (CSF2).